We begin with the raw amino-acid sequence, 438 residues long: Glucose-6-phosphate isomerase (438 aa).

The active-site Proton donor is Glu289. Residues His310 and Lys424 contribute to the active site.

Belongs to the GPI family.

Its subcellular location is the cytoplasm. The enzyme catalyses alpha-D-glucose 6-phosphate = beta-D-fructose 6-phosphate. The protein operates within carbohydrate biosynthesis; gluconeogenesis. It functions in the pathway carbohydrate degradation; glycolysis; D-glyceraldehyde 3-phosphate and glycerone phosphate from D-glucose: step 2/4. Catalyzes the reversible isomerization of glucose-6-phosphate to fructose-6-phosphate. The sequence is that of Glucose-6-phosphate isomerase from Oenococcus oeni (strain ATCC BAA-331 / PSU-1).